The following is a 248-amino-acid chain: Ribosomal RNA small subunit methyltransferase G (248 aa).

Residues Gly85, Phe90, 108 to 110, 137 to 138, and Arg156 each bind S-adenosyl-L-methionine; these read DSS and AE.

The protein belongs to the methyltransferase superfamily. RNA methyltransferase RsmG family.

Its subcellular location is the cytoplasm. Specifically methylates the N7 position of a guanine in 16S rRNA. In Prochlorococcus marinus (strain NATL2A), this protein is Ribosomal RNA small subunit methyltransferase G.